The primary structure comprises 256 residues: Acetylglutamate kinase (256 aa).

Substrate-binding positions include 40-41 (GG), R62, and N154.

Belongs to the acetylglutamate kinase family. ArgB subfamily.

It localises to the cytoplasm. The catalysed reaction is N-acetyl-L-glutamate + ATP = N-acetyl-L-glutamyl 5-phosphate + ADP. It participates in amino-acid biosynthesis; L-arginine biosynthesis; N(2)-acetyl-L-ornithine from L-glutamate: step 2/4. Functionally, catalyzes the ATP-dependent phosphorylation of N-acetyl-L-glutamate. The chain is Acetylglutamate kinase from Staphylococcus aureus (strain bovine RF122 / ET3-1).